Consider the following 1175-residue polypeptide: Major DNA-binding protein (1175 aa).

A zinc finger lies at 496–509 (CSLCDRASRPACAH). A Required for filament formation motif is present at residues 825–826 (FW). The segment at 1151–1175 (KRPPPEDDLFDMGAPPEKRLTFDML) is required for nuclear localization.

Belongs to the herpesviridae major DNA-binding protein family. Homooligomers. Forms double-helical filaments necessary for the formation of replication compartments within the host nucleus. Interacts with the origin-binding protein. Interacts with the helicase primase complex; this interaction stimulates primer synthesis activity of the helicase-primase complex. Interacts with the DNA polymerase. Interacts with the alkaline exonuclease; this interaction increases its nuclease processivity.

The protein resides in the host nucleus. Its function is as follows. Plays several crucial roles in viral infection. Participates in the opening of the viral DNA origin to initiate replication by interacting with the origin-binding protein. May disrupt loops, hairpins and other secondary structures present on ssDNA to reduce and eliminate pausing of viral DNA polymerase at specific sites during elongation. Promotes viral DNA recombination by performing strand-transfer, characterized by the ability to transfer a DNA strand from a linear duplex to a complementary single-stranded DNA circle. Can also catalyze the renaturation of complementary single strands. Additionally, reorganizes the host cell nucleus, leading to the formation of prereplicative sites and replication compartments. This process is driven by the protein which can form double-helical filaments in the absence of DNA. The chain is Major DNA-binding protein from Suid herpesvirus 1 (SuHV-1).